Consider the following 354-residue polypeptide: MAELKNDRYLRALLKQPVDMTPVWMMRQAGRYLPEYKATRAQAGDFMSLCKNHELACEVTLQPLRRYELDAAILFSDILTVPDAMGLGLYFEAGEGPRFERPTDTIDAIKKLSIPDPEDELGYVMKAVSTIRRELNGAVPLIGFSGSPWTLATYMVEGGSSKTFEKIKKMAYAEPAALHMLLDKLADSVILYLNAQVANGAQSLMIFDSWGGALSHTAYREFSLRYMQKIVDGLTRFADGRQVPVTLFTKGGGLWLEAMAETGCDALGLDWTVDIADARRRVGHKVALQGNMDPSMLYAPIPRIEEEVSQILAGYGEGTGHVFNLGHGIHQHVDPEHAGAFIKAVHAQSKQYHK.

Substrate is bound by residues 27-31, D77, Y154, S209, and H327; that span reads RQAGR.

It belongs to the uroporphyrinogen decarboxylase family. Homodimer.

It localises to the cytoplasm. The enzyme catalyses uroporphyrinogen III + 4 H(+) = coproporphyrinogen III + 4 CO2. The protein operates within porphyrin-containing compound metabolism; protoporphyrin-IX biosynthesis; coproporphyrinogen-III from 5-aminolevulinate: step 4/4. Functionally, catalyzes the decarboxylation of four acetate groups of uroporphyrinogen-III to yield coproporphyrinogen-III. This is Uroporphyrinogen decarboxylase from Shewanella putrefaciens (strain CN-32 / ATCC BAA-453).